Consider the following 180-residue polypeptide: ATP-dependent Clp protease proteolytic subunit 2 (180 aa).

Ser-86 (nucleophile) is an active-site residue. His-111 is a catalytic residue.

It belongs to the peptidase S14 family. As to quaternary structure, fourteen ClpP subunits assemble into 2 heptameric rings which stack back to back to give a disk-like structure with a central cavity, resembling the structure of eukaryotic proteasomes.

It localises to the cytoplasm. It carries out the reaction Hydrolysis of proteins to small peptides in the presence of ATP and magnesium. alpha-casein is the usual test substrate. In the absence of ATP, only oligopeptides shorter than five residues are hydrolyzed (such as succinyl-Leu-Tyr-|-NHMec, and Leu-Tyr-Leu-|-Tyr-Trp, in which cleavage of the -Tyr-|-Leu- and -Tyr-|-Trp bonds also occurs).. Cleaves peptides in various proteins in a process that requires ATP hydrolysis. Has a chymotrypsin-like activity. Plays a major role in the degradation of misfolded proteins. In Tropheryma whipplei (strain Twist) (Whipple's bacillus), this protein is ATP-dependent Clp protease proteolytic subunit 2.